The sequence spans 810 residues: Lon protease (810 aa).

The Lon N-terminal domain occupies L40–I233. G385–T392 provides a ligand contact to ATP. Residues L621 to G802 form the Lon proteolytic domain. Residues S708 and K751 contribute to the active site.

This sequence belongs to the peptidase S16 family. Homohexamer. Organized in a ring with a central cavity.

The protein resides in the cytoplasm. It catalyses the reaction Hydrolysis of proteins in presence of ATP.. ATP-dependent serine protease that mediates the selective degradation of mutant and abnormal proteins as well as certain short-lived regulatory proteins. Required for cellular homeostasis and for survival from DNA damage and developmental changes induced by stress. Degrades polypeptides processively to yield small peptide fragments that are 5 to 10 amino acids long. Binds to DNA in a double-stranded, site-specific manner. The sequence is that of Lon protease from Methylocella silvestris (strain DSM 15510 / CIP 108128 / LMG 27833 / NCIMB 13906 / BL2).